Consider the following 146-residue polypeptide: Hemoglobin subunit beta (146 aa).

N-acetylvaline is present on V1. The Globin domain maps to 2-146 (HLTAAEKSAI…VANALAHKYH (145 aa)). H63 contributes to the heme b binding site. K82 bears the N6-acetyllysine mark. H92 is a binding site for heme b. C93 is modified (S-nitrosocysteine). Position 144 is an N6-acetyllysine (K144).

This sequence belongs to the globin family. As to quaternary structure, heterotetramer of two alpha chains and two beta chains. In terms of tissue distribution, red blood cells.

Involved in oxygen transport from the lung to the various peripheral tissues. The chain is Hemoglobin subunit beta (HBB) from Cavia porcellus (Guinea pig).